A 182-amino-acid polypeptide reads, in one-letter code: NADH-quinone oxidoreductase subunit I (182 aa).

4Fe-4S ferredoxin-type domains are found at residues 52–82 (LTRD…LQKA) and 92–121 (DFFR…LTPD). Cysteine 62, cysteine 65, cysteine 68, cysteine 72, cysteine 101, cysteine 104, cysteine 107, and cysteine 111 together coordinate [4Fe-4S] cluster.

This sequence belongs to the complex I 23 kDa subunit family. NDH-1 is composed of 13 different subunits. Subunits NuoA, H, J, K, L, M, N constitute the membrane sector of the complex. The cofactor is [4Fe-4S] cluster.

It is found in the cell inner membrane. It catalyses the reaction a quinone + NADH + 5 H(+)(in) = a quinol + NAD(+) + 4 H(+)(out). Its function is as follows. NDH-1 shuttles electrons from NADH, via FMN and iron-sulfur (Fe-S) centers, to quinones in the respiratory chain. The immediate electron acceptor for the enzyme in this species is believed to be ubiquinone. Couples the redox reaction to proton translocation (for every two electrons transferred, four hydrogen ions are translocated across the cytoplasmic membrane), and thus conserves the redox energy in a proton gradient. This Pseudomonas syringae pv. tomato (strain ATCC BAA-871 / DC3000) protein is NADH-quinone oxidoreductase subunit I.